The primary structure comprises 438 residues: Thymidine phosphorylase (438 aa).

Belongs to the thymidine/pyrimidine-nucleoside phosphorylase family. As to quaternary structure, homodimer.

The enzyme catalyses thymidine + phosphate = 2-deoxy-alpha-D-ribose 1-phosphate + thymine. Its pathway is pyrimidine metabolism; dTMP biosynthesis via salvage pathway; dTMP from thymine: step 1/2. Functionally, the enzymes which catalyze the reversible phosphorolysis of pyrimidine nucleosides are involved in the degradation of these compounds and in their utilization as carbon and energy sources, or in the rescue of pyrimidine bases for nucleotide synthesis. This chain is Thymidine phosphorylase, found in Burkholderia cenocepacia (strain ATCC BAA-245 / DSM 16553 / LMG 16656 / NCTC 13227 / J2315 / CF5610) (Burkholderia cepacia (strain J2315)).